Here is a 930-residue protein sequence, read N- to C-terminus: Isoleucine--tRNA ligase (930 aa).

The 'HIGH' region signature appears at 57–67 (PYANGNIHVGH). Glu-554 is an L-isoleucyl-5'-AMP binding site. Residues 595–599 (KMSKS) carry the 'KMSKS' region motif. An ATP-binding site is contributed by Lys-598.

Belongs to the class-I aminoacyl-tRNA synthetase family. IleS type 1 subfamily. In terms of assembly, monomer.

Its subcellular location is the cytoplasm. It carries out the reaction tRNA(Ile) + L-isoleucine + ATP = L-isoleucyl-tRNA(Ile) + AMP + diphosphate. Catalyzes the attachment of isoleucine to tRNA(Ile). As IleRS can inadvertently accommodate and process structurally similar amino acids such as valine, to avoid such errors it has two additional distinct tRNA(Ile)-dependent editing activities. One activity is designated as 'pretransfer' editing and involves the hydrolysis of activated Val-AMP. The other activity is designated 'posttransfer' editing and involves deacylation of mischarged Val-tRNA(Ile). The chain is Isoleucine--tRNA ligase from Streptococcus agalactiae serotype III (strain NEM316).